Consider the following 673-residue polypeptide: Sodium/myo-inositol cotransporter 2 (673 aa).

The Extracellular portion of the chain corresponds to 1–27; the sequence is MESATISPQPPQSDSLEAFPQKSMEPA. A helical membrane pass occupies residues 28 to 48; sequence DIAVLVLYFLFVLAVGLWSTV. Residues 49 to 65 lie on the Cytoplasmic side of the membrane; it reads RTKRDTVKGYFLAGGDM. Residues 66 to 88 form a helical membrane-spanning segment; sequence VWWPVGASLFASNVGSGHFIGLA. The Extracellular segment spans residues 89 to 102; that stretch reads GSGAAVGISVAAYE. A helical membrane pass occupies residues 103–123; the sequence is LNGLFSVLMLAWVFLPIYIAG. Over 124–148 the chain is Cytoplasmic; it reads QVTTMPEYLRRRFGGNRISITLAVL. The chain crosses the membrane as a helical span at residues 149–169; it reads YLFIYIFTKISVDMYAGAIFI. Residues 170 to 180 lie on the Extracellular side of the membrane; that stretch reads QQSLHLDLYLA. A helical membrane pass occupies residues 181-201; it reads IVGLLAITALYTVAGGLAAVI. The Cytoplasmic segment spans residues 202–208; that stretch reads YTDALQT. The chain crosses the membrane as a helical span at residues 209–229; the sequence is VIMLIGAFILMGYSFAAVGGM. The Extracellular segment spans residues 230 to 272; sequence EGLKDQYFLALASNRSENSSCGLPREDAFHIFRDPLTSDLPWP. The chain crosses the membrane as a helical span at residues 273–293; that stretch reads GILFGMSIPSLWYWCTDQVIV. The Cytoplasmic portion of the chain corresponds to 294 to 308; it reads QRSLAAKNLSHAKGG. A helical transmembrane segment spans residues 309 to 329; that stretch reads SLMAAYLKVLPLFLMVFPGMV. Topologically, residues 330–375 are extracellular; the sequence is SRVLFPDQVACAHPDICQRVCSNPSGCSDIAYPKLVLELLPTGLRG. A helical transmembrane segment spans residues 376–396; sequence LMMAVMVAALMSSLTSIFNSA. Over 397 to 418 the chain is Cytoplasmic; that stretch reads STIFTMDLWNHIRPRASERELM. The chain crosses the membrane as a helical span at residues 419 to 439; sequence IVGRIFVFALVLVSILWIPIV. The Extracellular segment spans residues 440–446; it reads QASQGGQ. Residues 447 to 467 form a helical membrane-spanning segment; that stretch reads LFIYIQSISSYLQPPVAMVFI. At 468-479 the chain is on the cytoplasmic side; that stretch reads MGCFWKRTNEKG. A helical transmembrane segment spans residues 480 to 500; the sequence is AFSGLILGLLLGLVRLILDFV. The Extracellular portion of the chain corresponds to 501 to 521; it reads YAQPRCDQPDDRPAVVKDVHY. A helical membrane pass occupies residues 522 to 542; it reads LYFSMILSFTTLITVVTVSWF. Over 543–652 the chain is Cytoplasmic; it reads TETPSKEMVS…SLEENPLVKT (110 aa). A helical membrane pass occupies residues 653–673; it reads LLDVNCIVCISCAIFLWGYFA.

Belongs to the sodium:solute symporter (SSF) (TC 2.A.21) family.

The protein resides in the membrane. It localises to the apical cell membrane. The enzyme catalyses myo-inositol(out) + 2 Na(+)(out) = myo-inositol(in) + 2 Na(+)(in). The catalysed reaction is 1D-chiro-inositol(out) + 2 Na(+)(out) = 1D-chiro-inositol(in) + 2 Na(+)(in). It carries out the reaction D-glucose(out) + 2 Na(+)(out) = D-glucose(in) + 2 Na(+)(in). It catalyses the reaction D-xylose(out) + 2 Na(+)(out) = D-xylose(in) + 2 Na(+)(in). Its activity is regulated as follows. MI transport activity inhibited by D-chiro-inositol (DCI), phlorizin (Pz) and sodium (Na(+)). Insulin increases D-chiro-inositol uptake. Functionally, involved in the sodium-dependent cotransport of myo-inositol (MI) with a Na(+):MI stoichiometry of 2:1. Exclusively responsible for apical MI transport and absorption in intestine. Can also transport D-chiro-inositol (DCI) but not L-fucose. Exhibits stereospecific cotransport of both D-glucose and D-xylose. May induce apoptosis through the TNF-alpha, PDCD1 pathway. May play a role in the regulation of MI concentration in serum, involving reabsorption in at least the proximal tubule of the kidney. The protein is Sodium/myo-inositol cotransporter 2 of Mus musculus (Mouse).